Consider the following 210-residue polypeptide: 23.6 kDa heat shock protein, mitochondrial (210 aa).

A mitochondrion-targeting transit peptide spans Met1–Leu31. Residues Met100–Asn210 enclose the sHSP domain. Residues Gly145–Thr165 form a disordered region.

This sequence belongs to the small heat shock protein (HSP20) family. As to quaternary structure, may form oligomeric structures.

The protein resides in the mitochondrion. The chain is 23.6 kDa heat shock protein, mitochondrial (HSP23.6) from Arabidopsis thaliana (Mouse-ear cress).